The sequence spans 198 residues: Glycerol-3-phosphate acyltransferase (198 aa).

Transmembrane regions (helical) follow at residues 1-21, 52-72, 81-101, 115-135, and 153-173; these read MILI…IPAA, GPAL…VGLA, WTAL…FLGF, LALD…CIWL, and LAAA…LAAL.

The protein belongs to the PlsY family. Probably interacts with PlsX.

It localises to the cell membrane. It carries out the reaction an acyl phosphate + sn-glycerol 3-phosphate = a 1-acyl-sn-glycero-3-phosphate + phosphate. Its pathway is lipid metabolism; phospholipid metabolism. Catalyzes the transfer of an acyl group from acyl-phosphate (acyl-PO(4)) to glycerol-3-phosphate (G3P) to form lysophosphatidic acid (LPA). This enzyme utilizes acyl-phosphate as fatty acyl donor, but not acyl-CoA or acyl-ACP. This is Glycerol-3-phosphate acyltransferase from Deinococcus geothermalis (strain DSM 11300 / CIP 105573 / AG-3a).